We begin with the raw amino-acid sequence, 561 residues long: Glutamine--tRNA ligase (561 aa).

The 'HIGH' region signature appears at 34–44 (PEPNGYLHIGH). Residues 35–37 (EPN) and 41–47 (HIGHAKS) each bind ATP. Residues Asp-67 and Tyr-212 each coordinate L-glutamine. ATP is bound by residues Thr-231, 261–262 (RL), and 269–271 (MSK). Positions 268 to 272 (VMSKR) match the 'KMSKS' region motif.

This sequence belongs to the class-I aminoacyl-tRNA synthetase family. In terms of assembly, monomer.

It localises to the cytoplasm. The enzyme catalyses tRNA(Gln) + L-glutamine + ATP = L-glutaminyl-tRNA(Gln) + AMP + diphosphate. The chain is Glutamine--tRNA ligase from Idiomarina loihiensis (strain ATCC BAA-735 / DSM 15497 / L2-TR).